The following is a 491-amino-acid chain: Equilibrative nucleobase transporter 1 (491 aa).

Residues 17-37 (LLECLGFAGVLFGWPSLVFVF) form a helical membrane-spanning segment. An N-linked (GlcNAc...) asparagine glycan is attached at Asn56. Helical transmembrane passes span 72-92 (LIFT…GYIF), 102-122 (LIAI…SAGS), 123-143 (AVLL…FLIT), 156-176 (STII…FLII), and 188-208 (ASFI…FLLM). Asn220 and Asn229 each carry an N-linked (GlcNAc...) asparagine glycan. Position 253 is a phosphoserine (Ser253). A Phosphothreonine modification is found at Thr258. Helical transmembrane passes span 279 to 299 (FAWH…FIGT), 319 to 339 (TNAF…GLLM), 356 to 376 (STLA…SLLC), 396 to 418 (ILQV…LAFP), 427 to 447 (GLVM…FTLI), and 456 to 476 (FYVN…PFLV).

The protein belongs to the SLC43A transporter (TC 2.A.1.44) family. In terms of tissue distribution, widely expressed with highest levels in the liver and lung, followed by the pancreas. Highly expressed in macrophages.

The protein resides in the basolateral cell membrane. It catalyses the reaction adenine(out) = adenine(in). It carries out the reaction guanine(out) = guanine(in). The catalysed reaction is hypoxanthine(out) = hypoxanthine(in). With respect to regulation, adenine transport is strongly inhibited by decynium-22. Its activity is regulated as follows. 6-mercaptopurine-transport is inhibited by 6-thioguanine, 6-methylmercaptopurine and decynium-22. Its function is as follows. Sodium-independent purine-selective nucleobase transporter which mediates the equilibrative transport of extracellular purine nucleobases such as adenine, guanine and hypoxanthine. May regulate fatty acid (FA) transport in adipocytes, acting as a positive regulator of FA efflux and as a negative regulator of FA uptake. Functionally, sodium-independent purine-selective nucleobase transporter which mediates the equilibrative transport of extracellular purine nucleobase adenine. Mediates the influx and efflux of the purine nucleobase analog drug 6-mercaptopurine across the membrane. The polypeptide is Equilibrative nucleobase transporter 1 (SLC43A3) (Homo sapiens (Human)).